A 322-amino-acid polypeptide reads, in one-letter code: NADH-cytochrome b5 reductase 2 (322 aa).

Residues 31 to 48 (LAPIYAAVGITGVGVGLY) traverse the membrane as a helical segment. An FAD-binding FR-type domain is found at 72-176 (QGWFDLKLSE…KGPIVKYPWE (105 aa)). An FAD-binding site is contributed by 179–214 (KHNHICLIAGGTGITPMYQLAREIFKNPEDQTKVTL).

Belongs to the flavoprotein pyridine nucleotide cytochrome reductase family. Requires FAD as cofactor.

It is found in the mitochondrion outer membrane. The enzyme catalyses 2 Fe(III)-[cytochrome b5] + NADH = 2 Fe(II)-[cytochrome b5] + NAD(+) + H(+). Its function is as follows. May mediate the reduction of outer membrane cytochrome b5. This is NADH-cytochrome b5 reductase 2 (mcr1) from Aspergillus niger (strain ATCC MYA-4892 / CBS 513.88 / FGSC A1513).